The primary structure comprises 484 residues: Glycogen synthase (484 aa).

Lys15 is a binding site for ADP-alpha-D-glucose.

The protein belongs to the glycosyltransferase 1 family. Bacterial/plant glycogen synthase subfamily.

It carries out the reaction [(1-&gt;4)-alpha-D-glucosyl](n) + ADP-alpha-D-glucose = [(1-&gt;4)-alpha-D-glucosyl](n+1) + ADP + H(+). It functions in the pathway glycan biosynthesis; glycogen biosynthesis. Its function is as follows. Synthesizes alpha-1,4-glucan chains using ADP-glucose. The polypeptide is Glycogen synthase (Anoxybacillus flavithermus (strain DSM 21510 / WK1)).